Reading from the N-terminus, the 211-residue chain is Pyruvate dehydrogenase E1 component subunit beta, mitochondrial (211 aa).

Residue tyrosine 31 is modified to Phosphotyrosine. K(+) is bound by residues isoleucine 48, alanine 96, isoleucine 97, aspartate 99, and asparagine 101.

In terms of assembly, heterotetramer of two PDHA1 and two PDHB subunits. The heterotetramer interacts with DLAT, and is part of the multimeric pyruvate dehydrogenase complex that contains multiple copies of pyruvate dehydrogenase (E1), dihydrolipoamide acetyltransferase (DLAT, E2) and lipoamide dehydrogenase (DLD, E3). These subunits are bound to an inner core composed of about 48 DLAT and 12 PDHX molecules. Interacts with DLAT. Requires thiamine diphosphate as cofactor.

It localises to the mitochondrion matrix. It carries out the reaction N(6)-[(R)-lipoyl]-L-lysyl-[protein] + pyruvate + H(+) = N(6)-[(R)-S(8)-acetyldihydrolipoyl]-L-lysyl-[protein] + CO2. The pyruvate dehydrogenase complex catalyzes the overall conversion of pyruvate to acetyl-CoA and CO(2), and thereby links the glycolytic pathway to the tricarboxylic cycle. This chain is Pyruvate dehydrogenase E1 component subunit beta, mitochondrial, found in Mesocricetus auratus (Golden hamster).